A 329-amino-acid chain; its full sequence is MSAYIIETLIKILILVAVFSALGGFATYIERKVLAYFQRRLGPCYVGPFGLLQVAADGIKLFTKEDIIPQGANKFIFTLAPIIAMVSAFVSMAPIPFFPNFTLFGYEIKPLISDINIGFLFFLAVGAAGIYAPILAGLASNNKYSLIGSARATIQLLSFEVVSTLTILAPLMVVGSLSLVEINHYQSGGFLDWLVFKQPLAFVLFLIASYAELNRTPFDLLEHEAEIVAGYCTEYSGLKWGMFFLAEYAHLFAFSFVISIVFFGGFNAWGFIPGGLAILIKAGFFVFLSMWVRATYPHVRPDQLMDMCWKIMLPLALLNIVLTGIIILI.

9 helical membrane passes run 9-29, 42-62, 75-95, 117-137, 154-174, 188-208, 238-258, 260-280, and 309-329; these read LIKI…ATYI, GPCY…IKLF, FIFT…MAPI, IGFL…ILAG, IQLL…LMVV, GGFL…FLIA, LKWG…SFVI, IVFF…AILI, and WKIM…IILI.

It belongs to the complex I subunit 1 family. As to quaternary structure, NDH-1 is composed of 14 different subunits. Subunits NuoA, H, J, K, L, M, N constitute the membrane sector of the complex.

The protein localises to the cell inner membrane. The enzyme catalyses a quinone + NADH + 5 H(+)(in) = a quinol + NAD(+) + 4 H(+)(out). Its function is as follows. NDH-1 shuttles electrons from NADH, via FMN and iron-sulfur (Fe-S) centers, to quinones in the respiratory chain. The immediate electron acceptor for the enzyme in this species is believed to be ubiquinone. Couples the redox reaction to proton translocation (for every two electrons transferred, four hydrogen ions are translocated across the cytoplasmic membrane), and thus conserves the redox energy in a proton gradient. This subunit may bind ubiquinone. The sequence is that of NADH-quinone oxidoreductase subunit H from Helicobacter pylori (strain G27).